We begin with the raw amino-acid sequence, 268 residues long: Myb-related protein 315 (268 aa).

HTH myb-type domains follow at residues 9–61 (KFGL…MNYL) and 62–116 (RPDL…KKKL). 2 consecutive DNA-binding regions (H-T-H motif) follow at residues 37–61 (WRVIPKLAGLSRCGKSCRLRWMNYL) and 89–112 (WSKIALHIPGRTDNEIKNYWNTHI).

Expressed in roots, stems, leaves, seed pods and flowers. Strongest expression in the stem.

It is found in the nucleus. Functionally, transcription factor. This is Myb-related protein 315 from Antirrhinum majus (Garden snapdragon).